Here is a 314-residue protein sequence, read N- to C-terminus: MAATASPGASGMDGKPRTSPKSVKFLFGGLAGMGATVFVQPLDLVKNRMQLSGEGAKTREYKTSFHALISILRAEGLRGIYTGLSAGLLRQATYTTTRLGIYTVLFERLTGADGTPPGFLLKAVIGMTAGATGAFVGTPAEVALIRMTADGRLPVDQRRGYKNVFNALFRIVQEEGVPTLWRGCIPTMARAVVVNAAQLASYSQSKQFLLDSGYFSDNILCHFCASMISGLVTTAASMPVDIVKTRIQNMRMIDGKPEYKNGLDVLVKVVRYEGFFSLWKGFTPYYARLGPHTVLTFIFLEQMNKAYKRLFLSG.

An N-acetylalanine modification is found at alanine 2. At serine 6 the chain carries Phosphoserine. Solcar repeat units follow at residues valine 23–arginine 108, proline 117–phenylalanine 208, and aspartate 217–alanine 306. A helical transmembrane segment spans residues lysine 24–leucine 42. At lysine 57 the chain carries N6-succinyllysine. Residues glycine 83 to isoleucine 101 traverse the membrane as a helical segment. At tyrosine 102 the chain carries Phosphotyrosine. 3 helical membrane-spanning segments follow: residues phenylalanine 119–alanine 140, glycine 183–tyrosine 202, and histidine 222–valine 240. Lysine 256 carries the post-translational modification N6-acetyllysine. Residues glycine 281–leucine 300 traverse the membrane as a helical segment.

The protein belongs to the mitochondrial carrier (TC 2.A.29) family. Interacts with SMIM26. The N-terminus is blocked. Heart, liver and brain.

It is found in the mitochondrion inner membrane. The catalysed reaction is (S)-malate(in) + 2-oxoglutarate(out) = (S)-malate(out) + 2-oxoglutarate(in). The enzyme catalyses malonate(in) + 2-oxoglutarate(out) = malonate(out) + 2-oxoglutarate(in). It carries out the reaction succinate(in) + 2-oxoglutarate(out) = succinate(out) + 2-oxoglutarate(in). It catalyses the reaction maleate(in) + 2-oxoglutarate(out) = maleate(out) + 2-oxoglutarate(in). The catalysed reaction is oxaloacetate(in) + 2-oxoglutarate(out) = oxaloacetate(out) + 2-oxoglutarate(in). In terms of biological role, catalyzes the transport of 2-oxoglutarate (alpha-oxoglutarate) across the inner mitochondrial membrane in an electroneutral exchange for malate. Can also exchange 2-oxoglutarate for other dicarboxylic acids such as malonate, succinate, maleate and oxaloacetate, although with lower affinity. Contributes to several metabolic processes, including the malate-aspartate shuttle, the oxoglutarate/isocitrate shuttle, in gluconeogenesis from lactate, and in nitrogen metabolism. Maintains mitochondrial fusion and fission events, and the organization and morphology of cristae. Involved in the regulation of apoptosis. Helps protect from cytotoxic-induced apoptosis by modulating glutathione levels in mitochondria. This Bos taurus (Bovine) protein is Mitochondrial 2-oxoglutarate/malate carrier protein (SLC25A11).